Reading from the N-terminus, the 254-residue chain is Sugar fermentation stimulation protein homolog (254 aa).

It belongs to the SfsA family.

The sequence is that of Sugar fermentation stimulation protein homolog from Parasynechococcus marenigrum (strain WH8102).